The following is a 298-amino-acid chain: Acetylglutamate kinase (298 aa).

Substrate-binding positions include 69 to 70 (GG), R91, and N196.

It belongs to the acetylglutamate kinase family. ArgB subfamily.

It is found in the cytoplasm. The enzyme catalyses N-acetyl-L-glutamate + ATP = N-acetyl-L-glutamyl 5-phosphate + ADP. Its pathway is amino-acid biosynthesis; L-arginine biosynthesis; N(2)-acetyl-L-ornithine from L-glutamate: step 2/4. Functionally, catalyzes the ATP-dependent phosphorylation of N-acetyl-L-glutamate. This chain is Acetylglutamate kinase, found in Rhodopseudomonas palustris (strain BisA53).